The primary structure comprises 443 residues: C4-dicarboxylate transport protein (443 aa).

9 helical membrane-spanning segments follow: residues 10–30 (SLYF…HFYP), 46–66 (LIKM…IAGM), 78–98 (YALL…LIVV), 143–163 (IVGA…VIFG), 199–219 (PIGA…GSLV), 224–244 (LMIC…GGIC), 291–311 (VVGL…SIYL), 332–352 (ITLL…TGSG), and 354–374 (IVLA…LALI).

The protein belongs to the dicarboxylate/amino acid:cation symporter (DAACS) (TC 2.A.23) family.

It localises to the cell inner membrane. Functionally, responsible for the transport of dicarboxylates such as succinate, fumarate, and malate from the periplasm across the membrane. This chain is C4-dicarboxylate transport protein, found in Pseudomonas fluorescens (strain SBW25).